The following is a 473-amino-acid chain: Adenosylhomocysteinase (473 aa).

Residues Thr-64, Asp-139, and Glu-199 each coordinate substrate. 200 to 202 (TTT) provides a ligand contact to NAD(+). Residues Lys-229 and Asp-233 each coordinate substrate. NAD(+) is bound by residues Asn-234, 263-268 (GYGDVG), Glu-286, Asn-321, 342-344 (IGH), and Asn-387.

Belongs to the adenosylhomocysteinase family. Requires NAD(+) as cofactor.

Its subcellular location is the cytoplasm. It carries out the reaction S-adenosyl-L-homocysteine + H2O = L-homocysteine + adenosine. Its pathway is amino-acid biosynthesis; L-homocysteine biosynthesis; L-homocysteine from S-adenosyl-L-homocysteine: step 1/1. May play a key role in the regulation of the intracellular concentration of adenosylhomocysteine. This chain is Adenosylhomocysteinase, found in Paraburkholderia phymatum (strain DSM 17167 / CIP 108236 / LMG 21445 / STM815) (Burkholderia phymatum).